Consider the following 490-residue polypeptide: Betaine aldehyde dehydrogenase (490 aa).

Residue aspartate 93 coordinates K(+). 150–152 lines the NAD(+) pocket; it reads GAW. Catalysis depends on lysine 162, which acts as the Charge relay system. Residue 176 to 179 participates in NAD(+) binding; sequence KPSE. Valine 180 is a K(+) binding site. Residue 230–233 participates in NAD(+) binding; it reads GIAS. Leucine 246 provides a ligand contact to K(+). Glutamate 252 serves as the catalytic Proton acceptor. NAD(+) is bound by residues glycine 254, cysteine 286, and glutamate 387. Residue cysteine 286 is the Nucleophile of the active site. Position 286 is a cysteine sulfenic acid (-SOH) (cysteine 286). K(+)-binding residues include lysine 457 and glycine 460. Catalysis depends on glutamate 464, which acts as the Charge relay system.

The protein belongs to the aldehyde dehydrogenase family. As to quaternary structure, dimer of dimers. K(+) is required as a cofactor.

It catalyses the reaction betaine aldehyde + NAD(+) + H2O = glycine betaine + NADH + 2 H(+). It functions in the pathway amine and polyamine biosynthesis; betaine biosynthesis via choline pathway; betaine from betaine aldehyde: step 1/1. Its function is as follows. Involved in the biosynthesis of the osmoprotectant glycine betaine. Catalyzes the irreversible oxidation of betaine aldehyde to the corresponding acid. The chain is Betaine aldehyde dehydrogenase from Yersinia pseudotuberculosis serotype O:1b (strain IP 31758).